We begin with the raw amino-acid sequence, 625 residues long: Coagulation factor XI (625 aa).

The signal sequence occupies residues 1 to 18; sequence MTLLYQMVHFALFASVAG. Apple domains lie at 20 to 103, 110 to 193, 200 to 283, and 291 to 374; these read CVTT…SKQC, CSKD…LKSC, CIRD…LQHC, and CHSS…LRLC. 17 cysteine pairs are disulfide-bonded: C20-C103, C46-C76, C50-C56, C110-C193, C136-C165, C140-C146, C200-C283, C226-C255, C230-C236, C291-C374, C317-C346, C321-C327, C380-C500, C416-C432, C514-C581, C545-C560, and C571-C599. 2 N-linked (GlcNAc...) asparagine glycosylation sites follow: N90 and N126. Positions 388-623 constitute a Peptidase S1 domain; sequence IVGGTQSVHG…YVDWILEKTQ (236 aa). H431 serves as the catalytic Charge relay system. N450 carries N-linked (GlcNAc...) asparagine glycosylation. The active-site Charge relay system is the D480. N491 is a glycosylation site (N-linked (GlcNAc...) asparagine). 547–550 serves as a coordination point for heparin; that stretch reads AGYR. S575 (charge relay system) is an active-site residue.

Belongs to the peptidase S1 family. Plasma kallikrein subfamily. In terms of assembly, homodimer; disulfide-linked. After activation the heavy and light chains are also linked by a disulfide bond. Interacts (activated) with F9 (inactive and activated) in calcium-dependent manner. Forms a heterodimer with SERPINA5. Post-translationally, activated by factor XIIa (or XII), which cleaves each polypeptide after Arg-387 into the light chain, which contains the active site, and the heavy chain, which associates with high molecular weight (HMW) kininogen. Activated by F12 (activated); the presence of negatively charged surfaces accelerates activation. Activated by F2 (thrombin); the presence of negatively charged surfaces, such as polyphosphate and dextran sulfate, strongly accelerates activation. Autoactivated; the presence of negatively charged surfaces, such as polyphosphate and dextran sulfate, accelerates autoactivation and autolysis. In terms of processing, N-glycosylated on both chains. N-glycosylated sites mainly consist of nonfucosylated sialylated biantennary (in high abundance) and/or triantennary (in low abundance) complex structures.

Its subcellular location is the secreted. The enzyme catalyses Selective cleavage of Arg-|-Ala and Arg-|-Val bonds in factor IX to form factor IXa.. Inhibited by SERPINA5. Factor XI triggers the middle phase of the intrinsic pathway of blood coagulation by activating factor IX. The chain is Coagulation factor XI (F11) from Bos taurus (Bovine).